A 401-amino-acid chain; its full sequence is Exodeoxyribonuclease 7 large subunit (401 aa).

This sequence belongs to the XseA family. As to quaternary structure, heterooligomer composed of large and small subunits.

The protein localises to the cytoplasm. It carries out the reaction Exonucleolytic cleavage in either 5'- to 3'- or 3'- to 5'-direction to yield nucleoside 5'-phosphates.. Bidirectionally degrades single-stranded DNA into large acid-insoluble oligonucleotides, which are then degraded further into small acid-soluble oligonucleotides. The sequence is that of Exodeoxyribonuclease 7 large subunit from Lachnoclostridium phytofermentans (strain ATCC 700394 / DSM 18823 / ISDg) (Clostridium phytofermentans).